We begin with the raw amino-acid sequence, 582 residues long: Sodium-dependent low-affinity dicarboxylate transporter 1 (582 aa).

12 consecutive transmembrane segments (helical) span residues 17–37 (SFVIWGALLIFSPLLMFVGDS), 59–79 (ALPLAITAFIPMILFPLFGIM), 87–107 (AYLPDTCFLFMGGLMVALAVE), 130–150 (VMAGFMGVTGFLSMWISNTAT), 224–244 (LMLSVCFSANIGGAATITGTA), 271–291 (IFAFPMVFCCLIYCWCVLYLL), 317–337 (FSFAEMAVIFCFALLLVLWIL), 353–373 (EFVSDATSAMFIVILLFTLPE), 401–421 (FPWSVLFLLGGGFALAAGVKE), 455–475 (TNVCSNTVIASIFIPIVAELA), 482–502 (PLNFMLPVTISASFAFLLPVA), and 527–547 (VTLGCVVLSMLNMLLWAGFVF).

This sequence belongs to the SLC13A/DASS transporter (TC 2.A.47) family. NADC subfamily. Nad-1 and nad-2 are coexpressed in the intestinal tract from early larvae to adults, expression is from the pharynx through to the anus. Expression level is significantly greater in the anterior half of the intestine than in the posterior half.

The protein resides in the membrane. Low affinity sodium-dicarboxylate cotransporter that accepts a range of tricarboxylic acid-cycle intermediates with 4-5 carbon atoms. There is no interaction with monocarboxylates. This chain is Sodium-dependent low-affinity dicarboxylate transporter 1 (nac-1), found in Caenorhabditis elegans.